The following is a 175-amino-acid chain: NADH-quinone oxidoreductase subunit I 2 (175 aa).

4Fe-4S ferredoxin-type domains are found at residues 50-82 (HVLQ…IEAA) and 98-127 (KVYN…HGHG). [4Fe-4S] cluster-binding residues include Cys62, Cys65, Cys68, Cys72, Cys107, Cys110, Cys113, and Cys117.

It belongs to the complex I 23 kDa subunit family. As to quaternary structure, NDH-1 is composed of 14 different subunits. Subunits NuoA, H, J, K, L, M, N constitute the membrane sector of the complex. Requires [4Fe-4S] cluster as cofactor.

It is found in the cell inner membrane. The enzyme catalyses a quinone + NADH + 5 H(+)(in) = a quinol + NAD(+) + 4 H(+)(out). In terms of biological role, NDH-1 shuttles electrons from NADH, via FMN and iron-sulfur (Fe-S) centers, to quinones in the respiratory chain. The immediate electron acceptor for the enzyme in this species is believed to be ubiquinone. Couples the redox reaction to proton translocation (for every two electrons transferred, four hydrogen ions are translocated across the cytoplasmic membrane), and thus conserves the redox energy in a proton gradient. This is NADH-quinone oxidoreductase subunit I 2 from Koribacter versatilis (strain Ellin345).